The chain runs to 120 residues: MKSTRKSATQRRHRRLRRHLSGTSERPRLAVFRSNDHIYAQVIDDVAQHTLAAASTLDPDLKKSLSSTATQEASAEVGKLVAQRAIAKGINQVVFDRGGKLYHGRVKALAEAAREAGLNF.

Residues 1 to 20 (MKSTRKSATQRRHRRLRRHL) are compositionally biased toward basic residues. The disordered stretch occupies residues 1–26 (MKSTRKSATQRRHRRLRRHLSGTSER).

It belongs to the universal ribosomal protein uL18 family. Part of the 50S ribosomal subunit; part of the 5S rRNA/L5/L18/L25 subcomplex. Contacts the 5S and 23S rRNAs.

Its function is as follows. This is one of the proteins that bind and probably mediate the attachment of the 5S RNA into the large ribosomal subunit, where it forms part of the central protuberance. This chain is Large ribosomal subunit protein uL18, found in Synechocystis sp. (strain ATCC 27184 / PCC 6803 / Kazusa).